The following is a 519-amino-acid chain: MRRLGHHRLHGKTGGVGTKGMVAKLSIGVIVLLICTLSLLFSANIGSNREPTRPSKINVEELWESAKSGGWRPSSAPRSDWPPPTKETNGYLRVRCNGGLNQQRSAICNAVLAARIMNATLVLPELDANSFWHDDSGFQGIYDVEHFIETLKYDVKIVGKIPDVHKNGKTKKIKAFQIRPPRDAPIEWYLTTALKAMREHSAIYLTPFSHRLAEEIDNPEYQRLRCRVNYHALRFKPHIMKLSESIVDKLRSQGHFMSIHLRFEMDMLAFAGCFDIFNPEEQKILRKYRKENFADKRLIYNERRAIGKCPLTPEEVGLILRAMRFDNSTRIYLAAGELFGGEQFMKPFRTLFPRLDNHSSVDPSEELSATSQGLIGSAVDYMVCLLSDIFMPTYDGPSNFANNLLGHRLYYGFRTTIRPDRKALAPIFIAREKGKRAGFEEAVRRVMLKTNFGGPHKRVSPESFYTNSWPECFCQMNPKKSSDKCPPNNVIEILDSRLESIRDPDSTSQTNSTVTGLER.

At 1 to 24 (MRRLGHHRLHGKTGGVGTKGMVAK) the chain is on the cytoplasmic side. A helical; Signal-anchor for type II membrane protein membrane pass occupies residues 25–45 (LSIGVIVLLICTLSLLFSANI). The Lumenal portion of the chain corresponds to 46-519 (GSNREPTRPS…TNSTVTGLER (474 aa)). A disordered region spans residues 67 to 86 (KSGGWRPSSAPRSDWPPPTK). Asn118 carries an N-linked (GlcNAc...) asparagine glycan. 260-262 (HLR) serves as a coordination point for substrate. N-linked (GlcNAc...) asparagine glycosylation is found at Asn327, Asn357, and Asn511. Residues 497-519 (RLESIRDPDSTSQTNSTVTGLER) form a disordered region. Over residues 506 to 519 (STSQTNSTVTGLER) the composition is skewed to polar residues.

It belongs to the glycosyltransferase GT106 family.

The protein resides in the golgi apparatus membrane. Its pathway is glycan metabolism. This chain is O-fucosyltransferase 1, found in Arabidopsis thaliana (Mouse-ear cress).